The primary structure comprises 450 residues: Putative mediator of RNA polymerase II transcription subunit 27 (450 aa).

Residues 15–118 (QQQQAQQHQQ…QKLKKSMDLV (104 aa)) adopt a coiled-coil conformation.

Belongs to the Mediator complex subunit 27 family. As to quaternary structure, component of the Mediator complex.

Its subcellular location is the nucleus. In terms of biological role, component of the Mediator complex, a coactivator involved in the regulated transcription of nearly all RNA polymerase II-dependent genes. Mediator functions as a bridge to convey information from gene-specific regulatory proteins to the basal RNA polymerase II transcription machinery. Mediator is recruited to promoters by direct interactions with regulatory proteins and serves as a scaffold for the assembly of a functional preinitiation complex with RNA polymerase II and the general transcription factors. The chain is Putative mediator of RNA polymerase II transcription subunit 27 (med27) from Dictyostelium discoideum (Social amoeba).